Consider the following 793-residue polypeptide: Copalyl diphosphate synthase CPS1, chloroplastic (793 aa).

Residues 1-59 constitute a chloroplast transit peptide; it reads MASLSSTILSRSPAARRRITPASAKLHRPECFATSAWMGSSSKNLSLSYQLNHKKISVA. Residue Lys-238 participates in substrate binding. Mg(2+)-binding residues include Asp-370 and Asp-372. The short motif at 370-373 is the DXDD motif element; that stretch reads DIDD. Substrate is bound at residue Lys-457.

It belongs to the terpene synthase family. Mg(2+) is required as a cofactor.

Its subcellular location is the plastid. The protein localises to the chloroplast. It carries out the reaction (2E,6E,10E)-geranylgeranyl diphosphate = (+)-copalyl diphosphate. The protein operates within secondary metabolite biosynthesis; terpenoid biosynthesis. Its function is as follows. Involved in tanshinone biosynthesis in hairy roots. Catalyzes the conversion of geranylgeranyl diphosphate (GGPP) to copalyl diphosphate (CPP). The protein is Copalyl diphosphate synthase CPS1, chloroplastic of Salvia miltiorrhiza (Chinese sage).